A 466-amino-acid polypeptide reads, in one-letter code: MENGKEKFSLFSAILSVICVVFVAEAAAPVAAIGNSQFFWWIVLIVAFLLPYGLITSELGTTYTGEGGLYDWITKAFDHRWGARASWFYWVNFPLWMASLAVLCPDLLHTMFGFQLNTGISLLIELIFIWVIVLISLYPVSDSVWILNGGAVIKVFLALALGGLGVYSALTKGVANHYTLASLLPSFDLHSLSFISVIIFNLLGFEVICTFADSMENPKKQIPQSIIIGGIVIAAIYMFSAFGIGVAIPTNKLSTSSGLVDSFQVMLGTPTGWFISLIAFLFMLTLVGNMVSWSQGVNNIASYAADNGDMPKFFSKRRASNGISWGAALMNGIVATFIVVIAPLLPNQDLFWSFFSLNLVLFLLSYIPVFPAFYKLRKIDPETPRPFKVSGSDGILKVYMALPMIIIIISLIFTAIPLQYDKASLTEQLPITIGAIIFIVIGELIIKRKLQVQVSQPSSSHMNSYS.

The next 12 membrane-spanning stretches (helical) occupy residues 8–28, 30–50, 85–105, 120–140, 144–164, 192–212, 226–246, 273–293, 325–345, 350–370, 398–418, and 426–446; these read FSLFSAILSVICVVFVAEAAA, VAAIGNSQFFWWIVLIVAFLL, ASWFYWVNFPLWMASLAVLCP, ISLLIELIFIWVIVLISLYPV, VWILNGGAVIKVFLALALGGL, LSFISVIIFNLLGFEVICTFA, IIIGGIVIAAIYMFSAFGIGV, WFISLIAFLFMLTLVGNMVSW, WGAALMNGIVATFIVVIAPLL, LFWSFFSLNLVLFLLSYIPVF, VYMALPMIIIIISLIFTAIPL, and TEQLPITIGAIIFIVIGELII.

The protein belongs to the amino acid-polyamine-organocation (APC) superfamily. Glutamate:GABA antiporter (GGA) (TC 2.A.3.7) family.

It is found in the cell membrane. In terms of biological role, probably catalyzes agmatine/putrescine exchange. This Lactococcus lactis subsp. lactis (strain IL1403) (Streptococcus lactis) protein is Probable agmatine/putrescine antiporter AguD.